An 860-amino-acid polypeptide reads, in one-letter code: MTEYTPMIKQYLEIKDKYQDAFLFFRLGDFYEMFFEDALNASQILEITLTGREGGTKEKIPMCGVPYHSASGYIDTLIEKGYKVAICEQVEDPKTTKGMVKREVVQLISPGTVMDERGLKAKENNYIASLYCYEGKEYGFAYSDLSTGELKSTVIEASEDRLINELTTLSTRELIVSSSEKEVLSDVMKEQLGLTFSVHEEDTIPAENEKLVTRHMSLSEKRAIGKLLHYLKETQKRDLGHLQQAVHYETSNYMKMDYYSKRNLELAESIRGKGRQGTLLWLLDNTQTAMGGRMLKQWIDRPLIDRKKIIERQNDVSELMAHFFERLELVENLKNVYDLERLAGRVAYGNVNARDLIQLRNSLYQIPRIRATLLSMSSESLTELAEQLDPCEELTEKLEEAIMDSAPISIREGGIIKDGYNSQLDTYRDASRNGKTWIAELERKERELTGIKTLKVGFNRVFGYYIEVTRANTHLLPEGRYERKQTLTNAERYITPELKEKEKLILDAEEKSMELEYQLFSEVREMVKDYIERLQKLAKSVSEIDCLQSFADISEKNHFIRPTLSEDGSLHVKQGRHPVVEKVMGAQSYVANDCDLDENREILLITGPNMSGKSTYMRQVALTAICAQVGCFVPAEEAILPIFDQIFTRIGAADDLIAGQSTFMVEMLEARNAIVHATKDSLILFDEIGRGTATYDGMALAQAIIEYIHENVHAKTLFSTHYHELTDLEKELRGLQNIHVSAVEENGKVVFLHKIKEGPADKSYGIHVAELAELPKSLIERASRILEQLENDDKKIIIASVKQPEEVHEEVQLSMFPLEPEKKASSKETKLLKEIASMNIMQMTPMDAMNKLYELQSKIH.

607–614 provides a ligand contact to ATP; the sequence is GPNMSGKS.

This sequence belongs to the DNA mismatch repair MutS family.

This protein is involved in the repair of mismatches in DNA. It is possible that it carries out the mismatch recognition step. This protein has a weak ATPase activity. The chain is DNA mismatch repair protein MutS from Listeria monocytogenes serovar 1/2a (strain ATCC BAA-679 / EGD-e).